Here is a 179-residue protein sequence, read N- to C-terminus: MKGGKIVQLTRPNRINSEIRAIKVRLTGVEGDQIGIVNLREALKKSEELGLDLVEISPNAEPPVCRIMDYGKFLYEKSKSSKEQKKKQKVIHIKEIKFRPGTDEGDYQVKLRNLIRFLEDGDKAKITLRFRGREMAHQKIGVDVLNRVKNDLIELATVEYFPSKIEGRQMIMILAPKKK.

The protein belongs to the IF-3 family. In terms of assembly, monomer.

It is found in the cytoplasm. Functionally, IF-3 binds to the 30S ribosomal subunit and shifts the equilibrium between 70S ribosomes and their 50S and 30S subunits in favor of the free subunits, thus enhancing the availability of 30S subunits on which protein synthesis initiation begins. This Buchnera aphidicola subsp. Acyrthosiphon pisum (strain APS) (Acyrthosiphon pisum symbiotic bacterium) protein is Translation initiation factor IF-3.